Consider the following 727-residue polypeptide: NHL repeat-containing protein 2 (727 aa).

One can recognise a Thioredoxin domain in the interval 43–198 (RERDLTVPEL…TLKFYKERGQ (156 aa)). 6 NHL repeats span residues 207–249 (KLYK…TLKN), 260–302 (NSGR…IDLE), 330–364 (ISSP…VWAL), 404–434 (FAQP…VRMI), 456–500 (AFGD…VDPK), and 513–557 (ASNV…LDLE).

In terms of assembly, monomer.

It is found in the cytoplasm. It localises to the cytosol. Functionally, required for normal embryonic development. This Gallus gallus (Chicken) protein is NHL repeat-containing protein 2 (NHLRC2).